The primary structure comprises 102 residues: MATQKQDEFLLETEQTRTKPPPLYKVLLLNDDFTPMDFVIVVLQKFFGMDRERATRVMLQVHREGMGVCGVFPKDVAATKVEQVVAFARQHQHPLACVMEEN.

It belongs to the ClpS family. Binds to the N-terminal domain of the chaperone ClpA.

Involved in the modulation of the specificity of the ClpAP-mediated ATP-dependent protein degradation. This Aromatoleum aromaticum (strain DSM 19018 / LMG 30748 / EbN1) (Azoarcus sp. (strain EbN1)) protein is ATP-dependent Clp protease adapter protein ClpS.